A 184-amino-acid chain; its full sequence is Photosystem I assembly protein Ycf4 (184 aa).

2 helical membrane passes run 19–39 (ISNFCWAFILFLGSLGFLLVG) and 57–77 (IIFFPQGIVMSFYGIAGLFIS).

The protein belongs to the Ycf4 family.

It localises to the plastid. Its subcellular location is the chloroplast thylakoid membrane. Seems to be required for the assembly of the photosystem I complex. The sequence is that of Photosystem I assembly protein Ycf4 from Cucumis sativus (Cucumber).